Reading from the N-terminus, the 320-residue chain is Methionyl-tRNA formyltransferase (320 aa).

Residue 111 to 114 (SLLP) coordinates (6S)-5,6,7,8-tetrahydrofolate.

This sequence belongs to the Fmt family.

The enzyme catalyses L-methionyl-tRNA(fMet) + (6R)-10-formyltetrahydrofolate = N-formyl-L-methionyl-tRNA(fMet) + (6S)-5,6,7,8-tetrahydrofolate + H(+). Its function is as follows. Attaches a formyl group to the free amino group of methionyl-tRNA(fMet). The formyl group appears to play a dual role in the initiator identity of N-formylmethionyl-tRNA by promoting its recognition by IF2 and preventing the misappropriation of this tRNA by the elongation apparatus. This chain is Methionyl-tRNA formyltransferase, found in Bifidobacterium adolescentis (strain ATCC 15703 / DSM 20083 / NCTC 11814 / E194a).